The following is a 957-amino-acid chain: Glycine dehydrogenase (decarboxylating) (957 aa).

Position 702 is an N6-(pyridoxal phosphate)lysine (Lys-702).

Belongs to the GcvP family. In terms of assembly, the glycine cleavage system is composed of four proteins: P, T, L and H. Pyridoxal 5'-phosphate is required as a cofactor.

The catalysed reaction is N(6)-[(R)-lipoyl]-L-lysyl-[glycine-cleavage complex H protein] + glycine + H(+) = N(6)-[(R)-S(8)-aminomethyldihydrolipoyl]-L-lysyl-[glycine-cleavage complex H protein] + CO2. The glycine cleavage system catalyzes the degradation of glycine. The P protein binds the alpha-amino group of glycine through its pyridoxal phosphate cofactor; CO(2) is released and the remaining methylamine moiety is then transferred to the lipoamide cofactor of the H protein. The sequence is that of Glycine dehydrogenase (decarboxylating) from Bradyrhizobium sp. (strain ORS 278).